Reading from the N-terminus, the 439-residue chain is Serine/threonine-protein kinase 2 (439 aa).

The region spanning Asn87–Asn439 is the Protein kinase domain. ATP contacts are provided by residues Ile93–Val101 and Lys117. Catalysis depends on Asp307, which acts as the Proton acceptor.

It belongs to the protein kinase superfamily. Ser/Thr protein kinase family. Poxviruses subfamily. In terms of processing, phosphorylated in vivo. Autophosphorylated in vitro.

It is found in the host endoplasmic reticulum. Its subcellular location is the host endoplasmic reticulum-Golgi intermediate compartment. The catalysed reaction is L-seryl-[protein] + ATP = O-phospho-L-seryl-[protein] + ADP + H(+). It carries out the reaction L-threonyl-[protein] + ATP = O-phospho-L-threonyl-[protein] + ADP + H(+). Functionally, essential serine-protein kinase involved in the early stage of virion morphogenesis. This chain is Serine/threonine-protein kinase 2 (OPG054), found in Vaccinia virus (strain Copenhagen) (VACV).